The chain runs to 133 residues: Small ribosomal subunit protein bS6 (133 aa).

This sequence belongs to the bacterial ribosomal protein bS6 family.

In terms of biological role, binds together with bS18 to 16S ribosomal RNA. The chain is Small ribosomal subunit protein bS6 from Chlorobium limicola (strain DSM 245 / NBRC 103803 / 6330).